A 276-amino-acid chain; its full sequence is Apulose-4-phosphate transketolase subunit A (276 aa).

Belongs to the transketolase family. Probable heterodimer composed of AptA and AptB. Requires thiamine diphosphate as cofactor.

The enzyme catalyses apulose 4-phosphate + D-glyceraldehyde 3-phosphate = D-xylulose 5-phosphate + dihydroxyacetone phosphate. It participates in carbohydrate metabolism. Its function is as follows. Involved in catabolism of D-apiose. Catalyzes the transfer of the glycolaldehyde group from apulose-4-phosphate to D-glyceraldehyde 3-phosphate, generating dihydroxyacetone phosphate and D-xylulose-5-phosphate. The chain is Apulose-4-phosphate transketolase subunit A from Actinobacillus succinogenes (strain ATCC 55618 / DSM 22257 / CCUG 43843 / 130Z).